The following is a 250-amino-acid chain: Small ribosomal subunit protein uS3 (250 aa).

One can recognise a KH type-2 domain in the interval 39 to 111 (IRTLIKNNYP…KVQINIFEVK (73 aa)).

This sequence belongs to the universal ribosomal protein uS3 family. As to quaternary structure, part of the 30S ribosomal subunit. Forms a tight complex with proteins S10 and S14.

Binds the lower part of the 30S subunit head. Binds mRNA in the 70S ribosome, positioning it for translation. The chain is Small ribosomal subunit protein uS3 from Alder yellows phytoplasma.